Here is a 450-residue protein sequence, read N- to C-terminus: 23S rRNA (uracil(1939)-C(5))-methyltransferase RlmD (450 aa).

A TRAM domain is found at Ser12–Lys70. Cys83, Cys89, Cys92, and Cys171 together coordinate [4Fe-4S] cluster. Positions 283, 312, 317, 333, 360, and 380 each coordinate S-adenosyl-L-methionine. The active-site Nucleophile is Cys406.

This sequence belongs to the class I-like SAM-binding methyltransferase superfamily. RNA M5U methyltransferase family. RlmD subfamily.

It carries out the reaction uridine(1939) in 23S rRNA + S-adenosyl-L-methionine = 5-methyluridine(1939) in 23S rRNA + S-adenosyl-L-homocysteine + H(+). In terms of biological role, catalyzes the formation of 5-methyl-uridine at position 1939 (m5U1939) in 23S rRNA. The polypeptide is 23S rRNA (uracil(1939)-C(5))-methyltransferase RlmD (Shewanella baltica (strain OS223)).